An 82-amino-acid chain; its full sequence is uncharacterized protein (82 aa).

The span at 1 to 11 (MKARGSRENAS) shows a compositional bias: basic and acidic residues. Residues 1-25 (MKARGSRENASKRRPSQTQYDTHLR) form a disordered region. Residues 16-25 (SQTQYDTHLR) are compositionally biased toward polar residues.

This is an uncharacterized protein from Human cytomegalovirus (strain AD169) (HHV-5).